Consider the following 953-residue polypeptide: E3 ubiquitin-protein ligase ZNF598 (953 aa).

A compositionally biased stretch (basic residues) spans 25 to 39; it reads KPSKSTRIKPTKPHH. A disordered region spans residues 25–47; sequence KPSKSTRIKPTKPHHTPSNSMES. The segment at 57-97 adopts an RING-type zinc-finger fold; that stretch reads CVLCCQDIDLFAVGKCDHPVCYRCSTKMRVLCEQKYCAVCR. Residues 215–238 form a C2H2-type zinc finger; sequence PLCKFCDDRYLDNDELLKHLRRDH. Disordered regions lie at residues 299 to 779 and 884 to 911; these read SKNR…EDSS and EKQQ…SSLD. A compositionally biased stretch (low complexity) spans 371 to 380; it reads AAAMRASMAS. Residues 381 to 409 show a composition bias toward basic and acidic residues; it reads HQEERSHAQERSMLKPRREEKLEPDETRN. Composition is skewed to polar residues over residues 410–431 and 467–483; these read NRST…NGSL and LSGS…YTNQ. S489 carries the post-translational modification Phosphoserine. Low complexity-rich tracts occupy residues 508 to 518 and 536 to 553; these read QSSAASAWSQA and MTPM…PLPS. 2 stretches are compositionally biased toward polar residues: residues 555–564 and 641–650; these read SVPQPLTASS and LGSPSHTPET. The segment covering 655-666 has biased composition (basic and acidic residues); it reads AHKENVPEKKPP. Polar residues predominate over residues 695 to 711; the sequence is SCTSFPENITSSKQPVT. Residues 747 to 765 show a composition bias toward pro residues; the sequence is LPPPPPPGLGPAVSKPPPG. Residues 770-779 are compositionally biased toward polar residues; sequence PLNSNVEDSS.

The protein belongs to the ZNF598/HEL2 family.

The protein localises to the cytoplasm. The protein resides in the cytosol. The catalysed reaction is S-ubiquitinyl-[E2 ubiquitin-conjugating enzyme]-L-cysteine + [acceptor protein]-L-lysine = [E2 ubiquitin-conjugating enzyme]-L-cysteine + N(6)-ubiquitinyl-[acceptor protein]-L-lysine.. It functions in the pathway protein modification; protein ubiquitination. Its function is as follows. E3 ubiquitin-protein ligase that plays a key role in the ribosome quality control (RQC), a pathway that takes place when a ribosome has stalled during translation, leading to degradation of nascent peptide chains. ZNF598 is activated when ribosomes are stalled within an mRNA following translation of prematurely polyadenylated mRNAs. Acts as a ribosome collision sensor: specifically recognizes and binds collided di-ribosome, which arises when a trailing ribosome encounters a slower leading ribosome, leading to terminally arrest translation. Following binding to colliding ribosomes, mediates monoubiquitination of 40S ribosomal proteins RPS10/eS10 and RPS3/uS3, and 'Lys-63'-linked polyubiquitination of RPS20/uS10. Polyubiquitination of RPS20/uS10 promotes recruitment of the RQT (ribosome quality control trigger) complex, which drives the disassembly of stalled ribosomes, followed by degradation of nascent peptides. The protein is E3 ubiquitin-protein ligase ZNF598 of Danio rerio (Zebrafish).